A 397-amino-acid chain; its full sequence is Acetyl-CoA acetyltransferase, cytosolic (397 aa).

Met1 bears the N-acetylmethionine mark. Catalysis depends on Cys92, which acts as the Acyl-thioester intermediate. At Lys200 the chain carries N6-acetyllysine. 2 residues coordinate CoA: Arg223 and Ser226. Residues Lys233 and Lys235 each carry the N6-acetyllysine modification. Ser252 lines the CoA pocket. Cys383 functions as the Proton donor/acceptor in the catalytic mechanism.

Belongs to the thiolase-like superfamily. Thiolase family. Homotetramer.

It localises to the cytoplasm. Its subcellular location is the cytosol. It catalyses the reaction 2 acetyl-CoA = acetoacetyl-CoA + CoA. The protein operates within lipid metabolism; fatty acid metabolism. Its function is as follows. Involved in the biosynthetic pathway of cholesterol. This chain is Acetyl-CoA acetyltransferase, cytosolic (ACAT2), found in Homo sapiens (Human).